We begin with the raw amino-acid sequence, 204 residues long: Probable calcium-binding protein CML46 (204 aa).

3 EF-hand domains span residues L72 to S106, P132 to K167, and S170 to C204. The Ca(2+) site is built by D145, N147, D149, and D156.

Functionally, potential calcium sensor. The polypeptide is Probable calcium-binding protein CML46 (Arabidopsis thaliana (Mouse-ear cress)).